The sequence spans 489 residues: Monocarboxylate transporter 2 (489 aa).

Residues 1–21 (MPSESSVKATAAPPPFPLPPD) are Cytoplasmic-facing. Residues 22-42 (GGWGWVVVCASFISIGFSYAF) traverse the membrane as a helical segment. Residues 43 to 65 (PKAVTVFFNDIKDIFKTTSSQIA) lie on the Extracellular side of the membrane. Residues 66–86 (WISSIMLAVMYAGGPISSVLV) traverse the membrane as a helical segment. At 87-95 (NNYGSRPVV) the chain is on the cytoplasmic side. A helical transmembrane segment spans residues 96–116 (IVGGLLCCTGMILASFSSSVI). Residues 117-121 (ELYLT) lie on the Extracellular side of the membrane. The chain crosses the membrane as a helical span at residues 122-142 (VGFIGGLGLAFNLQPALTIIG). Residues 143-154 (KYFYRKRPLANG) lie on the Cytoplasmic side of the membrane. The chain crosses the membrane as a helical span at residues 155–175 (FAMAGSPVFLSTLAPFNQFLF). Over 176–179 (NSYG) the chain is Extracellular. The helical transmembrane segment at 180-200 (WKGSFLILGAIFLHSCVAGCL) threads the bilayer. Residues 201–250 (MRPVGPSPRAAKSKSKVGSRQDSSTKRLSKVSTAEKINRFLDFGLFTHRG) lie on the Cytoplasmic side of the membrane. The disordered stretch occupies residues 206 to 227 (PSPRAAKSKSKVGSRQDSSTKR). Residues 251–271 (FLIYLSGNVVLFLGMFAPIIF) form a helical membrane-spanning segment. Over 272–286 (LAPYAKDKGVDDYNS) the chain is Extracellular. The helical transmembrane segment at 287 to 307 (AFLLSVMAFTDMFARPSVGLI) threads the bilayer. Residues 308 to 316 (ANTSLIRPR) lie on the Cytoplasmic side of the membrane. A helical transmembrane segment spans residues 317–337 (IQYLFSVAIMFTGICHLLCPL). At 338-342 (AHSYT) the chain is on the extracellular side. The chain crosses the membrane as a helical span at residues 343–363 (ALVVYVIFFGIGFGSISSLLF). The Cytoplasmic segment spans residues 364–377 (ECLMDQVGASRFSS). A helical membrane pass occupies residues 378–398 (AVGLVTIVECCPVLFGPPLAG). At 399–410 (KLLDITGQYKYL) the chain is on the extracellular side. The helical transmembrane segment at 411–431 (YIASGIVVLSSGIYLLICNAI) threads the bilayer. Topologically, residues 432 to 489 (NYRLLEKERKREKARRKKSASQASKEMEALSRSKQDDVTVKVSNTHNPPSDRDKESSI) are cytoplasmic. The segment at 441-489 (KREKARRKKSASQASKEMEALSRSKQDDVTVKVSNTHNPPSDRDKESSI) is disordered. Basic and acidic residues-rich tracts occupy residues 456–470 (KEME…DDVT) and 480–489 (PSDRDKESSI).

It belongs to the major facilitator superfamily. Monocarboxylate porter (TC 2.A.1.13) family. In terms of assembly, homodimer. Interacts with GRID2IP. Interacts with EMB; interaction mediates SLC16A7 targeting to the plasma membrane. Interacts with isoform 2 of BSG. Detected in brain and kidney (at protein level).

Its subcellular location is the cell membrane. The protein localises to the basolateral cell membrane. It is found in the cytoplasm. It catalyses the reaction 3-methyl-2-oxobutanoate(out) + H(+)(out) = 3-methyl-2-oxobutanoate(in) + H(+)(in). The catalysed reaction is (S)-lactate(in) + H(+)(in) = (S)-lactate(out) + H(+)(out). The enzyme catalyses acetoacetate(out) + H(+)(out) = acetoacetate(in) + H(+)(in). It carries out the reaction (R)-3-hydroxybutanoate(out) + H(+)(out) = (R)-3-hydroxybutanoate(in) + H(+)(in). It catalyses the reaction 4-methyl-2-oxopentanoate(out) + H(+)(out) = 4-methyl-2-oxopentanoate(in) + H(+)(in). The catalysed reaction is pyruvate(out) + H(+)(out) = pyruvate(in) + H(+)(in). The enzyme catalyses (S)-3-hydroxybutanoate(out) + H(+)(out) = (S)-3-hydroxybutanoate(in) + H(+)(in). With respect to regulation, transport activity exhibits steep dependence on substrate concentration. Substrate concentration sensitivity of SLC16A7 arises from the strong inter-subunit cooperativity of the SLC16A7 dimer during transport. Inhibited by AR-C155858. Its function is as follows. Proton-coupled monocarboxylate symporter. Catalyzes the rapid transport across the plasma membrane of monocarboxylates such as L-lactate, pyruvate and ketone bodies, acetoacetate, beta-hydroxybutyrate and acetate. Dimerization is functionally required and both subunits work cooperatively in transporting substrate. The chain is Monocarboxylate transporter 2 (Slc16a7) from Rattus norvegicus (Rat).